We begin with the raw amino-acid sequence, 60 residues long: Metallothionein (60 aa).

The segment at 1 to 28 (MDPCDCAKTGTCNCGTSCTCANCSCTKC) is beta. Residues Cys4, Cys6, Cys12, Cys14, Cys18, Cys20, Cys23, Cys25, Cys28, Cys32, Cys33, Cys35, Cys36, Cys40, Cys43, Cys47, Cys49, Cys54, Cys58, and Cys59 each coordinate a divalent metal cation. An alpha region spans residues 29–60 (KKSCCECCPSGCSKCASGCACKDKTCDTNCCQ).

It belongs to the metallothionein superfamily. Type 1 family.

Its function is as follows. Metallothioneins have a high content of cysteine residues that bind various heavy metals. The protein is Metallothionein (mt) of Gadus morhua (Atlantic cod).